We begin with the raw amino-acid sequence, 500 residues long: Proline/betaine transporter (500 aa).

Over 1–37 (MLKRKKVKPITLRDVTIIDDGKLRKAITAASLGNAME) the chain is Cytoplasmic. Residues 38–58 (WFDFGVYGFVAYALGKVFFPG) traverse the membrane as a helical segment. At 59 to 65 (ADPSVQM) the chain is on the periplasmic side. A helical transmembrane segment spans residues 66-86 (VAALATFSVPFLIRPLGGLFF). Residues 87 to 97 (GMLGDKYGRQK) are Cytoplasmic-facing. Residues 98–118 (ILAITIVIMSISTFCIGLIPS) traverse the membrane as a helical segment. The Periplasmic portion of the chain corresponds to 119–121 (YDT). The helical transmembrane segment at 122–142 (IGIWAPILLLICKMAQGFSVG) threads the bilayer. Residues 143-169 (GEYTGASIFVAEYSPDRKRGFMGSWLD) lie on the Cytoplasmic side of the membrane. A helical transmembrane segment spans residues 170–190 (FGSIAGFVLGAGVVVLISTIV). The Periplasmic segment spans residues 191-194 (GEAN). The helical transmembrane segment at 195 to 215 (FLDWGWRIPFFIALPLGIIGL) threads the bilayer. Residues 216–260 (YLRHALEETPAFQQHVDKLEQGDREGLQDGPKVSFKEIATKYWRS) lie on the Cytoplasmic side of the membrane. A helical membrane pass occupies residues 261–281 (LLTCIGLVIATNVTYYMLLTY). Residues 282 to 297 (MPSYLSHNLHYSEDHG) are Periplasmic-facing. A helical transmembrane segment spans residues 298-318 (VLIIIAIMIGMLFVQPVMGLL). The Cytoplasmic portion of the chain corresponds to 319–325 (SDRFGRR). A helical transmembrane segment spans residues 326–346 (PFVLLGSVALFVLAIPAFILI). At 347–350 (NSNV) the chain is on the periplasmic side. Residues 351–371 (IGLIFAGLLMLAVILNCFTGV) form a helical membrane-spanning segment. The Cytoplasmic segment spans residues 372–390 (MASTLPAMFPTHIRYSALA). A helical transmembrane segment spans residues 391–411 (AAFNISVLVAGLTPTLAAWLV). The Periplasmic segment spans residues 412 to 416 (ESSQN). A helical transmembrane segment spans residues 417-437 (LMMPAYYLMVVAVVGLITGVT). At 438–500 (MKETANRPLK…LVQQHPRIDE (63 aa)) the chain is on the cytoplasmic side. Residues 453 to 498 (ASDIQEAKEILVEHYDNIEQKIDDIDHEIADLQAKRTRLVQQHPRI) are a coiled coil.

It belongs to the major facilitator superfamily. Metabolite:H+ Symporter (MHS) family (TC 2.A.1.6) family.

It localises to the cell inner membrane. Functionally, proton symporter that senses osmotic shifts and responds by importing osmolytes such as proline, glycine betaine, stachydrine, pipecolic acid, ectoine and taurine. It is both an osmosensor and an osmoregulator which is available to participate early in the bacterial osmoregulatory response. This chain is Proline/betaine transporter (proP), found in Escherichia coli O157:H7.